The primary structure comprises 179 residues: Large ribosomal subunit protein uL5 (179 aa).

It belongs to the universal ribosomal protein uL5 family. In terms of assembly, part of the 50S ribosomal subunit; part of the 5S rRNA/L5/L18/L25 subcomplex. Contacts the 5S rRNA and the P site tRNA. Forms a bridge to the 30S subunit in the 70S ribosome.

This is one of the proteins that bind and probably mediate the attachment of the 5S RNA into the large ribosomal subunit, where it forms part of the central protuberance. In the 70S ribosome it contacts protein S13 of the 30S subunit (bridge B1b), connecting the 2 subunits; this bridge is implicated in subunit movement. Contacts the P site tRNA; the 5S rRNA and some of its associated proteins might help stabilize positioning of ribosome-bound tRNAs. The sequence is that of Large ribosomal subunit protein uL5 from Geotalea daltonii (strain DSM 22248 / JCM 15807 / FRC-32) (Geobacter daltonii).